The following is a 428-amino-acid chain: Enolase (428 aa).

Glutamine 164 contributes to the (2R)-2-phosphoglycerate binding site. Catalysis depends on glutamate 208, which acts as the Proton donor. Mg(2+) is bound by residues aspartate 245, glutamate 286, and aspartate 313. (2R)-2-phosphoglycerate contacts are provided by lysine 338, arginine 367, serine 368, and lysine 389. Lysine 338 serves as the catalytic Proton acceptor.

It belongs to the enolase family. Requires Mg(2+) as cofactor.

It localises to the cytoplasm. The protein localises to the secreted. Its subcellular location is the cell surface. The catalysed reaction is (2R)-2-phosphoglycerate = phosphoenolpyruvate + H2O. It participates in carbohydrate degradation; glycolysis; pyruvate from D-glyceraldehyde 3-phosphate: step 4/5. Catalyzes the reversible conversion of 2-phosphoglycerate (2-PG) into phosphoenolpyruvate (PEP). It is essential for the degradation of carbohydrates via glycolysis. The polypeptide is Enolase (Pyrococcus horikoshii (strain ATCC 700860 / DSM 12428 / JCM 9974 / NBRC 100139 / OT-3)).